Consider the following 238-residue polypeptide: Pyridoxine 5'-phosphate synthase (238 aa).

N7 lines the 3-amino-2-oxopropyl phosphate pocket. A 1-deoxy-D-xylulose 5-phosphate-binding site is contributed by 9–10 (DH). R18 lines the 3-amino-2-oxopropyl phosphate pocket. H43 acts as the Proton acceptor in catalysis. The 1-deoxy-D-xylulose 5-phosphate site is built by R45 and H50. Catalysis depends on E70, which acts as the Proton acceptor. Position 100 (T100) interacts with 1-deoxy-D-xylulose 5-phosphate. H191 acts as the Proton donor in catalysis. 3-amino-2-oxopropyl phosphate-binding positions include G192 and 213–214 (GH).

It belongs to the PNP synthase family. Homooctamer; tetramer of dimers.

It is found in the cytoplasm. It carries out the reaction 3-amino-2-oxopropyl phosphate + 1-deoxy-D-xylulose 5-phosphate = pyridoxine 5'-phosphate + phosphate + 2 H2O + H(+). It participates in cofactor biosynthesis; pyridoxine 5'-phosphate biosynthesis; pyridoxine 5'-phosphate from D-erythrose 4-phosphate: step 5/5. Catalyzes the complicated ring closure reaction between the two acyclic compounds 1-deoxy-D-xylulose-5-phosphate (DXP) and 3-amino-2-oxopropyl phosphate (1-amino-acetone-3-phosphate or AAP) to form pyridoxine 5'-phosphate (PNP) and inorganic phosphate. This Thermosynechococcus vestitus (strain NIES-2133 / IAM M-273 / BP-1) protein is Pyridoxine 5'-phosphate synthase.